A 198-amino-acid chain; its full sequence is Recombination protein RecR (198 aa).

The C4-type zinc finger occupies 56–71; that stretch reads CKICHSLTENEICDIC. Positions 79-174 constitute a Toprim domain; it reads HLLCVVESPA…HMTRIAQGVP (96 aa).

This sequence belongs to the RecR family.

May play a role in DNA repair. It seems to be involved in an RecBC-independent recombinational process of DNA repair. It may act with RecF and RecO. In Acinetobacter baylyi (strain ATCC 33305 / BD413 / ADP1), this protein is Recombination protein RecR.